Here is a 345-residue protein sequence, read N- to C-terminus: Isocitrate lyase (345 aa).

58 to 60 (SGY) is a binding site for substrate. Aspartate 98 contacts Mg(2+). Cysteine 135 acts as the Proton acceptor in catalysis. Substrate contacts are provided by residues 136-137 (GH), arginine 170, 230-234 (NYSSS), and threonine 260. The segment at 318–345 (DPEARRRIEESEGFSEEQADPITSNDDD) is disordered. Residues 328–345 (SEGFSEEQADPITSNDDD) are compositionally biased toward acidic residues.

Homotetramer or homotrimer. It depends on Mg(2+) as a cofactor.

The enzyme catalyses D-threo-isocitrate = glyoxylate + succinate. The protein operates within carbohydrate metabolism; glyoxylate cycle; (S)-malate from isocitrate: step 1/2. Its function is as follows. Involved in the metabolic adaptation in response to environmental changes. Catalyzes the reversible formation of succinate and glyoxylate from isocitrate, a key step of the glyoxylate cycle, which operates as an anaplerotic route for replenishing the tricarboxylic acid cycle during growth on fatty acid substrates. The polypeptide is Isocitrate lyase (aceA) (Haloferax volcanii (strain ATCC 29605 / DSM 3757 / JCM 8879 / NBRC 14742 / NCIMB 2012 / VKM B-1768 / DS2) (Halobacterium volcanii)).